Consider the following 609-residue polypeptide: mRNA-decapping enzyme 1B (609 aa).

Residue alanine 2 is modified to N-acetylalanine. Position 147 is a phosphoserine (serine 147). A Phosphotyrosine modification is found at tyrosine 191. 2 disordered regions span residues 201–222 and 243–264; these read PVKP…LDPE and TVEP…LPIR. Residues 205-219 show a composition bias toward polar residues; sequence SENQQQRIPQPNQTL. Phosphoserine occurs at positions 272 and 333. 2 disordered regions span residues 326–345 and 359–438; these read TGPV…GVQN and TPGA…SSGV. Positions 336–345 are enriched in polar residues; the sequence is NIGTSRGVQN. The segment covering 368-378 has biased composition (low complexity); that stretch reads PSTPAPASSAA. Threonine 389 carries the phosphothreonine modification. Residues 418 to 438 are compositionally biased toward polar residues; it reads QSTLPRQTLPISGNQTGSSGV. A phosphoserine mark is found at serine 440 and serine 503.

This sequence belongs to the DCP1 family. As to quaternary structure, interacts with DCP1A.

It is found in the cytoplasm. Its subcellular location is the nucleus. It catalyses the reaction a 5'-end (N(7)-methyl 5'-triphosphoguanosine)-ribonucleoside in mRNA + H2O = N(7)-methyl-GDP + a 5'-end phospho-ribonucleoside in mRNA + 2 H(+). Its function is as follows. May play a role in the degradation of mRNAs, both in normal mRNA turnover and in nonsense-mediated mRNA decay. May remove the 7-methyl guanine cap structure from mRNA molecules, yielding a 5'-phosphorylated mRNA fragment and 7m-GDP. This chain is mRNA-decapping enzyme 1B (DCP1B), found in Pongo abelii (Sumatran orangutan).